A 152-amino-acid chain; its full sequence is MGLSTLEQKLTEMITAPVEALGFELVGIEFIRGHTSTLRIYIDSEDGINVDDCADVSHQVSAVLDVEDPITVAYNLEVSSPGLDRPLFTAEHYARFVGEEVTLVLRMAVQNRRKWQGVIKAVDGEMITVTVEGKDEVFALSNIQKANLVPHF.

It belongs to the RimP family.

The protein resides in the cytoplasm. Functionally, required for maturation of 30S ribosomal subunits. In Shigella boydii serotype 4 (strain Sb227), this protein is Ribosome maturation factor RimP.